We begin with the raw amino-acid sequence, 383 residues long: Acetylornithine deacetylase (383 aa).

Histidine 80 serves as a coordination point for Zn(2+). Residue aspartate 82 is part of the active site. A Zn(2+)-binding site is contributed by aspartate 112. Glutamate 144 is an active-site residue. The Zn(2+) site is built by glutamate 145, glutamate 169, and histidine 355.

This sequence belongs to the peptidase M20A family. ArgE subfamily. In terms of assembly, homodimer. Zn(2+) serves as cofactor. Co(2+) is required as a cofactor. The cofactor is glutathione.

The protein localises to the cytoplasm. It carries out the reaction N(2)-acetyl-L-ornithine + H2O = L-ornithine + acetate. It functions in the pathway amino-acid biosynthesis; L-arginine biosynthesis; L-ornithine from N(2)-acetyl-L-ornithine (linear): step 1/1. Functionally, catalyzes the hydrolysis of the amide bond of N(2)-acetylated L-amino acids. Cleaves the acetyl group from N-acetyl-L-ornithine to form L-ornithine, an intermediate in L-arginine biosynthesis pathway, and a branchpoint in the synthesis of polyamines. In Salmonella heidelberg (strain SL476), this protein is Acetylornithine deacetylase.